We begin with the raw amino-acid sequence, 342 residues long: Paired box protein Pax-9 (342 aa).

A DNA-binding region (paired) is located at residues 4–130 (AFGEVNQLGG…SSISRILRNK (127 aa)). The PAI subdomain stretch occupies residues 7–63 (EVNQLGGVFVNGRPLPNAIRLRIVELAQLGIRPCDISRQLRVSHGCVSKILARYNET). The RED subdomain stretch occupies residues 82–130 (TVVKHIRTYKQRDPGIFAWEIRDRLLADGVCDKYNVPSVSSISRILRNK). An interaction with KDM5B region spans residues 168–189 (AAAAKVPTPPGVPAIPGSVALP).

As to quaternary structure, interacts with KDM5B.

The protein resides in the nucleus. Its function is as follows. Transcription factor required for normal development of thymus, parathyroid glands, ultimobranchial bodies, teeth, skeletal elements of skull and larynx as well as distal limbs. This chain is Paired box protein Pax-9, found in Rattus norvegicus (Rat).